The chain runs to 182 residues: Protein GrpE (182 aa).

A disordered region spans residues 1 to 35 (MTQENQTPPPEQENLAADPAVETTAETPAVKTPEQ).

The protein belongs to the GrpE family. As to quaternary structure, homodimer.

The protein localises to the cytoplasm. In terms of biological role, participates actively in the response to hyperosmotic and heat shock by preventing the aggregation of stress-denatured proteins, in association with DnaK and GrpE. It is the nucleotide exchange factor for DnaK and may function as a thermosensor. Unfolded proteins bind initially to DnaJ; upon interaction with the DnaJ-bound protein, DnaK hydrolyzes its bound ATP, resulting in the formation of a stable complex. GrpE releases ADP from DnaK; ATP binding to DnaK triggers the release of the substrate protein, thus completing the reaction cycle. Several rounds of ATP-dependent interactions between DnaJ, DnaK and GrpE are required for fully efficient folding. This is Protein GrpE from Polynucleobacter necessarius subsp. necessarius (strain STIR1).